We begin with the raw amino-acid sequence, 153 residues long: uncharacterized protein (153 aa).

Disordered stretches follow at residues 24-87 and 101-153; these read PEDS…DRPL and GDPR…RIPS. A compositionally biased stretch (low complexity) spans 27–37; that stretch reads SSCPCPRLPLS. Basic and acidic residues predominate over residues 143 to 153; that stretch reads TRKESSCRIPS.

This is an uncharacterized protein from Dryophytes versicolor (chameleon treefrog).